A 422-amino-acid polypeptide reads, in one-letter code: Glutamyl-tRNA reductase (422 aa).

Substrate-binding positions include 50–53 (TCNR), Ser-110, 115–117 (ETQ), and Gln-121. The Nucleophile role is filled by Cys-51. An NADP(+)-binding site is contributed by 190–195 (GAGEMS).

The protein belongs to the glutamyl-tRNA reductase family. As to quaternary structure, homodimer.

The enzyme catalyses (S)-4-amino-5-oxopentanoate + tRNA(Glu) + NADP(+) = L-glutamyl-tRNA(Glu) + NADPH + H(+). It participates in porphyrin-containing compound metabolism; protoporphyrin-IX biosynthesis; 5-aminolevulinate from L-glutamyl-tRNA(Glu): step 1/2. Catalyzes the NADPH-dependent reduction of glutamyl-tRNA(Glu) to glutamate 1-semialdehyde (GSA). The sequence is that of Glutamyl-tRNA reductase from Campylobacter fetus subsp. fetus (strain 82-40).